A 357-amino-acid chain; its full sequence is tRNA pseudouridine synthase D (357 aa).

Residue Asp-76 is the Nucleophile of the active site. The region spanning Gly-151–Gln-331 is the TRUD domain.

Belongs to the pseudouridine synthase TruD family.

It carries out the reaction uridine(13) in tRNA = pseudouridine(13) in tRNA. Its function is as follows. Responsible for synthesis of pseudouridine from uracil-13 in transfer RNAs. This chain is tRNA pseudouridine synthase D, found in Sulfurimonas denitrificans (strain ATCC 33889 / DSM 1251) (Thiomicrospira denitrificans (strain ATCC 33889 / DSM 1251)).